A 546-amino-acid chain; its full sequence is Chaperonin GroEL 4 (546 aa).

ATP-binding positions include 30–33, lysine 51, 87–91, glycine 415, and aspartate 495; these read TLGP and DGTTT. The disordered stretch occupies residues 524–546; it reads APKDTPAAGQPGGPGAGGPGLDF. The segment covering 533 to 546 has biased composition (gly residues); it reads QPGGPGAGGPGLDF.

Belongs to the chaperonin (HSP60) family. Forms a cylinder of 14 subunits composed of two heptameric rings stacked back-to-back. Interacts with the co-chaperonin GroES.

It localises to the cytoplasm. The catalysed reaction is ATP + H2O + a folded polypeptide = ADP + phosphate + an unfolded polypeptide.. Together with its co-chaperonin GroES, plays an essential role in assisting protein folding. The GroEL-GroES system forms a nano-cage that allows encapsulation of the non-native substrate proteins and provides a physical environment optimized to promote and accelerate protein folding. This Paraburkholderia xenovorans (strain LB400) protein is Chaperonin GroEL 4.